A 617-amino-acid chain; its full sequence is MALVGSRVELDADEDIFEDALETISRSPSDMATSGFHFVPCETKRTSRQLGASAMGRPEGSSAKVDLKSGLEECAEALNLFLSNKFKDALELLRPWAKESMYHALGYSTIVVLQAVMTFEQQDIQNGISAMKDALQTCQKYRKKCTVVESFSSLLSRGSLEQLSEEEMHAEICYAECLLQKAALTFVQDENMINFIKGGLKIRTSYQIYKECLSILHVIQKNKQEQHFFYEFEGGVKLGTGAFNLMLSLLPARIIRLLEFIGFSGNRDLGLLQLREGASGSSMRSPLCCLTILAFHTYISLILGTGEVNVVEAESLLAPFLQQFPNGSLILFYHARIELLKGNTEKAQETFRKCISVQEEWKQFHHLCYWELMWIHIYQQNWMQAYYYSDLLCKESKWSKATYVFLKAAILSMLPEEEVAATKENVVSLFRQVDGLKQRIAGKSLPTEKFAVRKARRYSPPSGVPGKLVMPALEMMYVWNGFSIVGKRKDLSENLLVTVEKAEEALQNQDFTDYSVDDECLVKLLKGCCLKNLERPLQAELCFNHVVESEKLLKYDHYLVPFTLFELAFLYKSQGEIDKAIKVLETARNNYKDYSLESRLHFRIQAALHLWKKPSTD.

TPR repeat units lie at residues 328–361 (SLIL…QEEW), 520–553 (CLVK…EKLL), and 561–594 (PFTL…YKDY).

The protein belongs to the TTC39 family. As to expression, high expression in lung and spleen. Low lower expression in liver and small intestine. Weak expression in heart, brain, kidney, adipose, and adrenal gland.

Its function is as follows. Regulates high density lipoprotein (HDL) cholesterol metabolism by promoting the ubiquitination and degradation of the oxysterols receptors LXR (NR1H2 and NR1H3). The chain is Tetratricopeptide repeat protein 39B from Mus musculus (Mouse).